Reading from the N-terminus, the 666-residue chain is UvrABC system protein B (666 aa).

Positions 25–412 (EQVQAGAPYQ…EEQIVEQVIR (388 aa)) constitute a Helicase ATP-binding domain. 38-45 (GATGTGKT) serves as a coordination point for ATP. Positions 91–114 (YYDYYQPEAYIPVTDTYIAKTASI) match the Beta-hairpin motif. A Helicase C-terminal domain is found at 429–595 (QVDDLLAEIQ…PIIKRSSNAI (167 aa)). Residues 626–661 (PNLITQLEAQMKEAAKNLEFEEAAQYRDRIKKLRER) form the UVR domain.

The protein belongs to the UvrB family. In terms of assembly, forms a heterotetramer with UvrA during the search for lesions. Interacts with UvrC in an incision complex.

It localises to the cytoplasm. In terms of biological role, the UvrABC repair system catalyzes the recognition and processing of DNA lesions. A damage recognition complex composed of 2 UvrA and 2 UvrB subunits scans DNA for abnormalities. Upon binding of the UvrA(2)B(2) complex to a putative damaged site, the DNA wraps around one UvrB monomer. DNA wrap is dependent on ATP binding by UvrB and probably causes local melting of the DNA helix, facilitating insertion of UvrB beta-hairpin between the DNA strands. Then UvrB probes one DNA strand for the presence of a lesion. If a lesion is found the UvrA subunits dissociate and the UvrB-DNA preincision complex is formed. This complex is subsequently bound by UvrC and the second UvrB is released. If no lesion is found, the DNA wraps around the other UvrB subunit that will check the other stand for damage. The protein is UvrABC system protein B of Synechococcus sp. (strain ATCC 27144 / PCC 6301 / SAUG 1402/1) (Anacystis nidulans).